The following is a 143-amino-acid chain: Nucleoside diphosphate kinase (143 aa).

ATP-binding residues include lysine 11, phenylalanine 59, arginine 87, threonine 93, arginine 104, and asparagine 114. Residue histidine 117 is the Pros-phosphohistidine intermediate of the active site.

The protein belongs to the NDK family. In terms of assembly, homotetramer. It depends on Mg(2+) as a cofactor.

It localises to the cytoplasm. The enzyme catalyses a 2'-deoxyribonucleoside 5'-diphosphate + ATP = a 2'-deoxyribonucleoside 5'-triphosphate + ADP. It catalyses the reaction a ribonucleoside 5'-diphosphate + ATP = a ribonucleoside 5'-triphosphate + ADP. Its function is as follows. Major role in the synthesis of nucleoside triphosphates other than ATP. The ATP gamma phosphate is transferred to the NDP beta phosphate via a ping-pong mechanism, using a phosphorylated active-site intermediate. The chain is Nucleoside diphosphate kinase from Alteromonas mediterranea (strain DSM 17117 / CIP 110805 / LMG 28347 / Deep ecotype).